Consider the following 356-residue polypeptide: tRNA-specific 2-thiouridylase MnmA (356 aa).

ATP is bound by residues 6–13 and Leu32; that span reads AMSGGVDS. Cys101 (nucleophile) is an active-site residue. Cys101 and Cys193 are disulfide-bonded. ATP is bound at residue Gly125. Residues 143 to 145 are interaction with tRNA; that stretch reads KDQ. Residue Cys193 is the Cysteine persulfide intermediate of the active site.

It belongs to the MnmA/TRMU family.

The protein localises to the cytoplasm. The enzyme catalyses S-sulfanyl-L-cysteinyl-[protein] + uridine(34) in tRNA + AH2 + ATP = 2-thiouridine(34) in tRNA + L-cysteinyl-[protein] + A + AMP + diphosphate + H(+). Functionally, catalyzes the 2-thiolation of uridine at the wobble position (U34) of tRNA, leading to the formation of s(2)U34. The polypeptide is tRNA-specific 2-thiouridylase MnmA (Mycolicibacterium smegmatis (strain ATCC 700084 / mc(2)155) (Mycobacterium smegmatis)).